A 158-amino-acid polypeptide reads, in one-letter code: Transcriptional repressor NrdR (158 aa).

Residues Cys-3–Cys-34 fold into a zinc finger. Residues Pro-49–Glu-139 enclose the ATP-cone domain.

This sequence belongs to the NrdR family. Zn(2+) serves as cofactor.

In terms of biological role, negatively regulates transcription of bacterial ribonucleotide reductase nrd genes and operons by binding to NrdR-boxes. The protein is Transcriptional repressor NrdR of Bordetella petrii (strain ATCC BAA-461 / DSM 12804 / CCUG 43448).